Here is a 158-residue protein sequence, read N- to C-terminus: uncharacterized protein (158 aa).

The N-terminal stretch at 1-16 is a signal peptide; the sequence is MFRPILILTILSCVLA. The N-linked (GlcNAc...) asparagine glycan is linked to Asn-122.

This is an uncharacterized protein from Caenorhabditis elegans.